A 429-amino-acid chain; its full sequence is Z-DNA-binding protein 1 (429 aa).

Z-binding domains are found at residues proline 8–glycine 70 and proline 103–arginine 166. The disordered stretch occupies residues leucine 68–glutamine 107. 2 consecutive short sequence motifs (RIP homotypic interaction motif (RHIM)) follow at residues asparagine 195 to valine 219 and aspartate 253 to valine 277. 2 disordered regions span residues valine 277 to proline 299 and lysine 339 to isoleucine 429. The segment covering alanine 347–glycine 358 has biased composition (gly residues). Residues lysine 407–histidine 420 are compositionally biased toward basic and acidic residues.

Homodimer. Interacts (via RIP homotypic interaction motif) with RIPK3; leading to RIPK3 activation and necroptosis; interaction is enhanced by CASP6. Interacts (via RIP homotypic interaction motif) with RIPK1. Component of the AIM2 PANoptosome complex, a multiprotein complex that drives inflammatory cell death (PANoptosis). As to quaternary structure, (Microbial infection) Interacts (via RIP homotypic interaction motif/RHIM) with herpes simplex virus 1/HHV-1 protein RIR1/ICP6 (via RHIM); this interaction may induce heteromeric amyloid assemblies and prevent necroptosis activation. Interacts with human herpes simplex virus 1/HHV-1 protein ICP0. In terms of processing, phosphorylated. In terms of tissue distribution, highly expressed in lymphatic tissues including lymph node, leukocytes, tonsil, bone marrow and spleen. Expressed to a lesser extent in thymus, lung and liver.

The protein resides in the cytoplasm. The protein localises to the nucleus. Its activity is regulated as follows. ZBP1-dependent necroptosis is normally inhibited by RIPK1: RIPK1 inhibits the ZBP1-induced activation of RIPK3 via FADD-mediated recruitment of CASP8, which cleaves RIPK1 and limits TNF-induced necroptosis. Functionally, key innate sensor that recognizes and binds Z-RNA structures, which are produced by a number of viruses, such as herpesvirus, orthomyxovirus or flavivirus, and triggers different forms of cell death. ZBP1 acts as an essential mediator of pyroptosis, necroptosis and apoptosis (PANoptosis), an integral part of host defense against pathogens, by activating RIPK3, caspase-8 (CASP8), and the NLRP3 inflammasome. Key activator of necroptosis, a programmed cell death process in response to death-inducing TNF-alpha family members, via its ability to bind Z-RNA: once activated upon Z-RNA-binding, ZBP1 interacts and stimulates RIPK3 kinase, which phosphorylates and activates MLKL, triggering execution of programmed necrosis. In addition to TNF-induced necroptosis, necroptosis can also take place in the nucleus in response to orthomyxoviruses infection: ZBP1 recognizes and binds Z-RNA structures that are produced in infected nuclei by orthomyxoviruses, such as the influenza A virus (IAV), leading to ZBP1 activation, RIPK3 stimulation and subsequent MLKL phosphorylation, triggering disruption of the nuclear envelope and leakage of cellular DNA into the cytosol. ZBP1-dependent cell death in response to IAV infection promotes interleukin-1 alpha (IL1A) induction in an NLRP3-inflammasome-independent manner: IL1A expression is required for the optimal interleukin-1 beta (IL1B) production, and together, these cytokines promote infiltration of inflammatory neutrophils to the lung, leading to the formation of neutrophil extracellular traps. In addition to its direct role in driving necroptosis via its ability to sense Z-RNAs, also involved in PANoptosis triggered in response to bacterial infection: component of the AIM2 PANoptosome complex, a multiprotein complex that triggers PANoptosis. Also acts as the apical sensor of fungal infection responsible for activating PANoptosis. Involved in CASP8-mediated cell death via its interaction with RIPK1 but independently of its ability to sense Z-RNAs. In some cell types, also able to restrict viral replication by promoting cell death-independent responses. In response to Zika virus infection in neurons, promotes a cell death-independent pathway that restricts viral replication: together with RIPK3, promotes a death-independent transcriptional program that modifies the cellular metabolism via up-regulation expression of the enzyme ACOD1/IRG1 and production of the metabolite itaconate. Itaconate inhibits the activity of succinate dehydrogenase, generating a metabolic state in neurons that suppresses replication of viral genomes. In terms of biological role, (Microbial infection) In case of herpes simplex virus 1/HHV-1 infection, forms hetero-amyloid structures with HHV-1 protein RIR1/ICP6 which may inhibit ZBP1-mediated necroptosis, thereby preventing host cell death pathway and allowing viral evasion. The polypeptide is Z-DNA-binding protein 1 (Homo sapiens (Human)).